We begin with the raw amino-acid sequence, 225 residues long: UPF0758 protein Ping_0056 (225 aa).

The MPN domain occupies 103–225 (ALTSAAQTKA…CTSFAENGWI (123 aa)). Zn(2+) contacts are provided by histidine 174, histidine 176, and aspartate 187. Positions 174-187 (HNHPSGDPSASEAD) match the JAMM motif motif.

The protein belongs to the UPF0758 family.

The polypeptide is UPF0758 protein Ping_0056 (Psychromonas ingrahamii (strain DSM 17664 / CCUG 51855 / 37)).